The chain runs to 428 residues: Histidinol dehydrogenase (428 aa).

Substrate contacts are provided by Ser-232, Gln-254, and His-257. Positions 254 and 257 each coordinate Zn(2+). Catalysis depends on proton acceptor residues Glu-324 and His-325. Substrate is bound by residues His-325, Asp-358, Glu-412, and His-417. Position 358 (Asp-358) interacts with Zn(2+). His-417 contributes to the Zn(2+) binding site.

The protein belongs to the histidinol dehydrogenase family. It depends on Zn(2+) as a cofactor.

It catalyses the reaction L-histidinol + 2 NAD(+) + H2O = L-histidine + 2 NADH + 3 H(+). The protein operates within amino-acid biosynthesis; L-histidine biosynthesis; L-histidine from 5-phospho-alpha-D-ribose 1-diphosphate: step 9/9. Functionally, catalyzes the sequential NAD-dependent oxidations of L-histidinol to L-histidinaldehyde and then to L-histidine. In Thermotoga maritima (strain ATCC 43589 / DSM 3109 / JCM 10099 / NBRC 100826 / MSB8), this protein is Histidinol dehydrogenase.